A 414-amino-acid chain; its full sequence is Tryptophan synthase beta chain (414 aa).

The tract at residues 1-26 (MVSTFSRKNQNYKKDDLNQPSKDGRF) is disordered. The segment covering 12–26 (YKKDDLNQPSKDGRF) has biased composition (basic and acidic residues). Lys109 carries the N6-(pyridoxal phosphate)lysine modification.

The protein belongs to the TrpB family. As to quaternary structure, tetramer of two alpha and two beta chains. It depends on pyridoxal 5'-phosphate as a cofactor.

The enzyme catalyses (1S,2R)-1-C-(indol-3-yl)glycerol 3-phosphate + L-serine = D-glyceraldehyde 3-phosphate + L-tryptophan + H2O. The protein operates within amino-acid biosynthesis; L-tryptophan biosynthesis; L-tryptophan from chorismate: step 5/5. The beta subunit is responsible for the synthesis of L-tryptophan from indole and L-serine. The chain is Tryptophan synthase beta chain from Prochlorococcus marinus (strain MIT 9215).